We begin with the raw amino-acid sequence, 260 residues long: Chlorocatechol 1,2-dioxygenase (260 aa).

Residues Y130, Y164, H188, and H190 each contribute to the Fe cation site.

It belongs to the intradiol ring-cleavage dioxygenase family. The cofactor is Fe(3+).

It carries out the reaction 3-chlorocatechol + O2 = (2E,4Z)-2-chloromuconate + 2 H(+). The enzyme catalyses 3,5-dichlorocatechol + O2 = (2E,4E)-2,4-dichloromuconate + 2 H(+). The protein operates within aromatic compound metabolism; 3-chlorocatechol degradation. Its function is as follows. Preferentially converts 3-chlorocatechol and 3,5-dichlorocatechol as opposed to other chlorinated catechols. Retains diminished activity toward non-chlorinated substrates. The chain is Chlorocatechol 1,2-dioxygenase (clcA) from Pseudomonas putida (Arthrobacter siderocapsulatus).